Here is a 219-residue protein sequence, read N- to C-terminus: 2,5-diamino-6-ribosylamino-4(3H)-pyrimidinone 5'-phosphate reductase (219 aa).

Residues Thr-52, Asp-56, 87-90 (SRCR), Val-134, and 156-159 (GGTL) each bind NADP(+).

This sequence belongs to the HTP reductase family. Homodimer.

The enzyme catalyses 2,5-diamino-6-(1-D-ribitylamino)pyrimidin-4(3H)-one 5'-phosphate + NADP(+) = 2,5-diamino-6-(1-D-ribosylamino)pyrimidin-4(3H)-one 5'-phosphate + NADPH + H(+). It carries out the reaction 2,5-diamino-6-(1-D-ribitylamino)pyrimidin-4(3H)-one 5'-phosphate + NAD(+) = 2,5-diamino-6-(1-D-ribosylamino)pyrimidin-4(3H)-one 5'-phosphate + NADH + H(+). It functions in the pathway cofactor biosynthesis; riboflavin biosynthesis. Catalyzes an early step in riboflavin biosynthesis, the NADPH-dependent reduction of the ribose side chain of 2,5-diamino-6-ribosylamino-4(3H)-pyrimidinone 5'-phosphate, yielding 2,5-diamino-6-ribitylamino-4(3H)-pyrimidinone 5'-phosphate. This chain is 2,5-diamino-6-ribosylamino-4(3H)-pyrimidinone 5'-phosphate reductase, found in Archaeoglobus fulgidus (strain ATCC 49558 / DSM 4304 / JCM 9628 / NBRC 100126 / VC-16).